Reading from the N-terminus, the 401-residue chain is Putative phosphatidylinositol 4-phosphate 5-kinase 11 (401 aa).

The region spanning methionine 1–phenylalanine 390 is the PIPK domain. The span at serine 242–arginine 260 shows a compositional bias: polar residues. Residues serine 242–cysteine 268 are disordered. The segment at tyrosine 350–serine 371 is activation loop.

It catalyses the reaction a 1,2-diacyl-sn-glycero-3-phospho-(1D-myo-inositol 4-phosphate) + ATP = a 1,2-diacyl-sn-glycero-3-phospho-(1D-myo-inositol-4,5-bisphosphate) + ADP + H(+). This chain is Putative phosphatidylinositol 4-phosphate 5-kinase 11 (PIP5K11), found in Arabidopsis thaliana (Mouse-ear cress).